The sequence spans 290 residues: Glycine--tRNA ligase alpha subunit (290 aa).

This sequence belongs to the class-II aminoacyl-tRNA synthetase family. As to quaternary structure, tetramer of two alpha and two beta subunits.

The protein resides in the cytoplasm. It carries out the reaction tRNA(Gly) + glycine + ATP = glycyl-tRNA(Gly) + AMP + diphosphate. This chain is Glycine--tRNA ligase alpha subunit, found in Synechococcus sp. (strain CC9902).